Reading from the N-terminus, the 535-residue chain is EH domain-containing protein 3 (535 aa).

Met-1 bears the N-acetylmethionine mark. In terms of domain architecture, Dynamin-type G spans 55–286; the sequence is FDNKPMVLLV…DLFRDIQSLP (232 aa). Positions 65–72 are G1 motif; that stretch reads GQYSTGKT. 65–72 provides a ligand contact to ATP; it reads GQYSTGKT. The tract at residues 91–92 is G2 motif; the sequence is EP. Positions 153 to 156 are G3 motif; sequence DTPG. Positions 198-227 form a coiled coil; the sequence is DEFSEVIKALKNHEDKMRVVLNKADQIETQ. The interval 219-222 is G4 motif; it reads NKAD. Lys-220 contacts ATP. Residue Ile-243 is a region of interest, G5 motif. An ATP-binding site is contributed by Trp-258. Residue Lys-315 forms a Glycyl lysine isopeptide (Lys-Gly) (interchain with G-Cter in SUMO) linkage. Phosphoserine is present on residues Ser-349 and Ser-456. One can recognise an EH domain in the interval 444-532; it reads DKPMYDEIFY…AHLLPPSKRK (89 aa). Residues 476–511 enclose the EF-hand domain; sequence LPNSVLGKIWKLADIDKDGMLDDEEFALANHLIKVK. Ca(2+) is bound by residues Asp-489, Asp-491, Asp-493, Met-495, and Glu-500. A Glycyl lysine isopeptide (Lys-Gly) (interchain with G-Cter in SUMO) cross-link involves residue Lys-511.

It belongs to the TRAFAC class dynamin-like GTPase superfamily. Dynamin/Fzo/YdjA family. EHD subfamily. In terms of assembly, homooligomer. Heterooligomer with EHD1. Heterooligomer with EHD2 and EHD4; ATP-binding is required for heterooligomerization. Interacts with PACSIN1. Interacts with PACSIN2. Interacts (via EH domain) with MICALL1. Interacts (via EH domain) with RAB11FIP2. Interacts with ANK2. Interacts with CACNA1GG and CACNA1H. In terms of tissue distribution, strong expression seen in the kidney, brain and liver. In the kidney, expressed exclusively by glomerular endothelial cells; at protein level. Expressed in skeletal muscle neuromuscular junction perisynaptic region; at protein level.

It localises to the recycling endosome membrane. Its subcellular location is the cell membrane. The protein localises to the cell projection. The protein resides in the cilium membrane. It is found in the cytoplasmic vesicle. Functionally, ATP- and membrane-binding protein that controls membrane reorganization/tubulation upon ATP hydrolysis. In vitro causes tubulation of endocytic membranes. Binding to phosphatidic acid induces its membrane tubulation activity. Plays a role in endocytic transport. Involved in early endosome to recycling endosome compartment (ERC), retrograde early endosome to Golgi, and endosome to plasma membrane (rapid recycling) protein transport. Involved in the regulation of Golgi maintenance and morphology. Involved in the recycling of internalized D1 dopamine receptor. Plays a role in cardiac protein trafficking probably implicating ANK2. Involved in the ventricular membrane targeting of SLC8A1 and CACNA1C and probably the atrial membrane localization of CACNA1GG and CACNA1H implicated in the regulation of atrial myocyte excitability and cardiac conduction. In conjunction with EHD4 may be involved in endocytic trafficking of KDR/VEGFR2 implicated in control of glomerular function. Involved in the rapid recycling of integrin beta-3 implicated in cell adhesion maintenance. Involved in the unidirectional retrograde dendritic transport of endocytosed BACE1 and in efficient sorting of BACE1 to axons implicating a function in neuronal APP processing. Plays a role in the formation of the ciliary vesicle, an early step in cilium biogenesis; possibly sharing redundant functions with Ehd1. The chain is EH domain-containing protein 3 from Mus musculus (Mouse).